Reading from the N-terminus, the 219-residue chain is MDRQVKGILGAKLGMTQVWDNNRVVPVTVVQAGPCVVSQVRSQEKDGYAAVQLAYGAIDPRKVKKPISGHYAKADVAPRRHIVELRTTDAGEYSSGQEVTVEEFPAGISVDVTGKTKGKGYAGPMKRHGFHGLRASHGVERKHRSPGSIGGCATPGRVFKGTRMAGRMGGVRYTVQNLTVQAVDTENNLLLVRGAIPGPKGALVLVRTAAKAKKGGAAK.

Belongs to the universal ribosomal protein uL3 family. Part of the 50S ribosomal subunit. Forms a cluster with proteins L14 and L19.

Its function is as follows. One of the primary rRNA binding proteins, it binds directly near the 3'-end of the 23S rRNA, where it nucleates assembly of the 50S subunit. In Salinispora tropica (strain ATCC BAA-916 / DSM 44818 / JCM 13857 / NBRC 105044 / CNB-440), this protein is Large ribosomal subunit protein uL3.